The primary structure comprises 490 residues: Transcription factor MYB101 (490 aa).

Residues 1–21 (MDGGGETTATATMEGRGLKKG) form a disordered region. HTH myb-type domains follow at residues 15–67 (GRGL…ANHL) and 68–122 (RPNL…KRRQ). 2 DNA-binding regions (H-T-H motif) span residues 43-67 (WNAVQKNSGLLRCGKSCRLRWANHL) and 95-118 (WARMASQLPGRTDNEIKNYWNTRM). The tract at residues 168-206 (YTNSSNTSSSSSSFSSSSSQPSKRLRPDPLVSTNPGLNP) is disordered. A compositionally biased stretch (low complexity) spans 169–186 (TNSSNTSSSSSSFSSSSS).

In terms of tissue distribution, present mostly in flowers, siliques and floral shoot tips. Expression is restricted to the subapical pith cells of both vegetative and flowering plants and to the hypocotyl hook. Expressed in pollen grains and pollen tube. Mostly expressed in mature pollen grains, and, to a lower extent, in inflorescences and siliques.

The protein resides in the nucleus. Its function is as follows. Transcription activator. Binds to 5'-CAACTGTC-3' and/or 5'-TAACAAA-3' motif in target gene promoter (e.g. alpha-amylase) to promote their expression. Positive regulator of abscisic acid (ABA) responses leading to growth arrest during seed germination. Promotes the expression of aleurone-related genes (e.g. CP1, CP, GASA1, BXL1 and BXL2) in seeds. Together with MYB33 and MYB65, promotes the programmed cell death (PCD) leading to vacuolation of protein storage vacuoles (PSVs) in the aleurone layers during seed germination. Maybe involved in the regulation of leaves lamina morphogenesis. Involved in pollen grain development. Together with MYB97 and MYB120, functions as a male factor that controls pollen tube-synergid interaction in fertilization. Required for pollen tube growth arrest and sperm cell release in the female gametophyte, probably via the regulation of pollen tube-specific gene expression. This chain is Transcription factor MYB101, found in Arabidopsis thaliana (Mouse-ear cress).